A 553-amino-acid chain; its full sequence is CDP-diacylglycerol--glycerol-3-phosphate 3-phosphatidyltransferase, mitochondrial (553 aa).

The N-terminal 25 residues, 1 to 25 (MAAPAAGPVFWRRLLGLLPGRPGLA), are a transit peptide targeting the mitochondrion. The residue at position 46 (Ser46) is a Phosphoserine. Residue 121-128 (ASLYLGTG) participates in ATP binding. PLD phosphodiesterase domains follow at residues 212 to 238 (TIGL…SDSY) and 457 to 490 (RGWT…GYRS). Residues His217, Lys219, and Asp224 contribute to the active site.

This sequence belongs to the CDP-alcohol phosphatidyltransferase class-II family. In terms of tissue distribution, widely expressed with higher expression in testis, liver and brain.

It is found in the mitochondrion. The catalysed reaction is a CDP-1,2-diacyl-sn-glycerol + sn-glycerol 3-phosphate = a 1,2-diacyl-sn-glycero-3-phospho-(1'-sn-glycero-3'-phosphate) + CMP + H(+). Its pathway is phospholipid metabolism; phosphatidylglycerol biosynthesis; phosphatidylglycerol from CDP-diacylglycerol: step 1/2. With respect to regulation, activated by calcium and magnesium and inhibited by other bivalent cations. Its function is as follows. Functions in the biosynthesis of the anionic phospholipids phosphatidylglycerol and cardiolipin. This Mus musculus (Mouse) protein is CDP-diacylglycerol--glycerol-3-phosphate 3-phosphatidyltransferase, mitochondrial (Pgs1).